A 140-amino-acid polypeptide reads, in one-letter code: ATP synthase epsilon chain (140 aa).

The protein belongs to the ATPase epsilon chain family. In terms of assembly, F-type ATPases have 2 components, CF(1) - the catalytic core - and CF(0) - the membrane proton channel. CF(1) has five subunits: alpha(3), beta(3), gamma(1), delta(1), epsilon(1). CF(0) has three main subunits: a, b and c.

It is found in the cell membrane. Its function is as follows. Produces ATP from ADP in the presence of a proton gradient across the membrane. The sequence is that of ATP synthase epsilon chain from Baumannia cicadellinicola subsp. Homalodisca coagulata.